We begin with the raw amino-acid sequence, 147 residues long: Fluoride-specific ion channel FluC 1 (147 aa).

A run of 4 helical transmembrane segments spans residues 29 to 49, 61 to 81, 90 to 110, and 118 to 138; these read YVYIFIGGALGALLRYLISFL, IANLTGAFVMGLLTALTIAFF, AITTGFLGALTTFSTFQLELI, and FITLLLYAVTSYVFGILLCYV. Na(+) contacts are provided by Gly97 and Thr100.

It belongs to the fluoride channel Fluc/FEX (TC 1.A.43) family.

The protein resides in the cell membrane. The enzyme catalyses fluoride(in) = fluoride(out). Na(+) is not transported, but it plays an essential structural role and its presence is essential for fluoride channel function. Fluoride-specific ion channel. Important for reducing fluoride concentration in the cell, thus reducing its toxicity. This chain is Fluoride-specific ion channel FluC 1, found in Staphylococcus aureus (strain Mu50 / ATCC 700699).